Consider the following 242-residue polypeptide: Large ribosomal subunit protein uL30x (242 aa).

The protein belongs to the universal ribosomal protein uL30 family.

This is Large ribosomal subunit protein uL30x (RPL7C) from Arabidopsis thaliana (Mouse-ear cress).